The following is a 223-amino-acid chain: Endonuclease V (223 aa).

2 residues coordinate Mg(2+): aspartate 45 and aspartate 113.

This sequence belongs to the endonuclease V family. The cofactor is Mg(2+).

It localises to the cytoplasm. The catalysed reaction is Endonucleolytic cleavage at apurinic or apyrimidinic sites to products with a 5'-phosphate.. Functionally, DNA repair enzyme involved in the repair of deaminated bases. Selectively cleaves double-stranded DNA at the second phosphodiester bond 3' to a deoxyinosine leaving behind the intact lesion on the nicked DNA. This chain is Endonuclease V, found in Dehalococcoides mccartyi (strain ATCC BAA-2100 / JCM 16839 / KCTC 5957 / BAV1).